A 536-amino-acid chain; its full sequence is Inactive phospholipase D5 (536 aa).

The Cytoplasmic segment spans residues 1-68 (MEIRQHEWLS…DKLEHSQQKC (68 aa)). Residues 69 to 89 (IVIFALVCCFAVLVALIFSAV) traverse the membrane as a helical segment. Over 90–536 (DIMGEDEDGL…NATGREPLSV (447 aa)) the chain is Extracellular. An N-linked (GlcNAc...) asparagine glycan is attached at asparagine 121. Residues 215-242 (NKGRLQSSFWIVDKQHVYIGSAGLDWRS) form the PLD phosphodiesterase 1 domain. N-linked (GlcNAc...) asparagine glycosylation occurs at asparagine 302. A PLD phosphodiesterase 2 domain is found at 434–460 (FPKLNRNKYMVTDGAAYIGNFDWVGND). The segment at 503-536 (QPTKQPNCSSLSKLKSPSKQPAMANATGREPLSV) is disordered. Over residues 511 to 521 (SSLSKLKSPSK) the composition is skewed to low complexity.

The protein belongs to the phospholipase D family.

Its subcellular location is the membrane. This Mus musculus (Mouse) protein is Inactive phospholipase D5 (Pld5).